The sequence spans 435 residues: Putrescine transporter PotE (435 aa).

12 helical membrane passes run 8 to 28 (IGVV…GIIM), 39 to 59 (ISIV…YAFA), 95 to 115 (LVIA…ELFG), 117 to 137 (ILSP…ATVL), 148 to 168 (ISSF…IIGW), 185 to 205 (VPTF…FLGL), 224 to 244 (IAVL…TNVI), 275 to 295 (VIMG…QFTI), 320 to 340 (APVV…LMTI), 354 to 374 (LAVV…AVLL), 386 to 406 (TTVF…YAAG), and 409 to 429 (AMLY…FVSY).

This sequence belongs to the amino acid-polyamine-organocation (APC) superfamily. Basic amino acid/polyamine antiporter (APA) (TC 2.A.3.2) family.

It localises to the cell inner membrane. The catalysed reaction is putrescine(in) + H(+)(in) = putrescine(out) + H(+)(out). It catalyses the reaction putrescine(in) + L-ornithine(out) = putrescine(out) + L-ornithine(in). Catalyzes both the uptake and excretion of putrescine. The uptake of putrescine is dependent on the membrane potential and the excretion involves putrescine-ornithine antiporter activity. The sequence is that of Putrescine transporter PotE from Haemophilus influenzae (strain ATCC 51907 / DSM 11121 / KW20 / Rd).